The following is a 229-amino-acid chain: Small ribosomal subunit protein uS5 (229 aa).

An S5 DRBM domain is found at 61–124 (LEEQVLDVKL…AHAKLSLIKV (64 aa)).

Belongs to the universal ribosomal protein uS5 family. As to quaternary structure, part of the 30S ribosomal subunit. Contacts protein S4.

Functionally, with S4 and S12 plays an important role in translational accuracy. The protein is Small ribosomal subunit protein uS5 of Methanococcus maripaludis (strain C6 / ATCC BAA-1332).